The chain runs to 458 residues: F-box/WD repeat-containing protein 9 (458 aa).

An N-acetylmethionine modification is found at Met1. Disordered stretches follow at residues 1–30 and 42–64; these read MELP…DAQA and KSGL…SASE. Residues 16 to 26 show a composition bias toward acidic residues; that stretch reads DDSDPESETDP. Position 18 is a phosphoserine (Ser18). At Thr55 the chain carries Phosphothreonine. Position 59 is a phosphoserine (Ser59). Residues 76–123 form the F-box domain; sequence EPGLLSLPPELLLEICSYLDARLVLHVLSRVCHALRDLVSDHVTWRLR. 7 WD repeats span residues 171-210, 220-261, 264-301, 305-342, 344-381, 387-424, and 427-458; these read GHVA…TESN, KRNS…QQFG, KASS…ALLK, LHSR…VLQR, QLDS…FQLI, GHSF…RTIC, and RHDN…RLQA.

In terms of assembly, interacts with SKP1 and CUL1.

Substrate-recognition component of the SCF (SKP1-CUL1-F-box protein)-type E3 ubiquitin ligase complex. This Homo sapiens (Human) protein is F-box/WD repeat-containing protein 9 (FBXW9).